A 406-amino-acid chain; its full sequence is MTPARHFSARLRTVFEGVGHWALSTQAGLKPSRLLPQQASPRLLSVSCADLAKRQELPGKKPLSEKKLKRYFVDYRRVLVCGGNGGAGASCFHSEPRKEFGGPDGGDGGNGGHVILRADQQVKSLSSVLSRYQGFSGEDGGSKNCFGRSGAVLYIRVPMGTLVKEGGRVVADLSRVGDEYIAALGGAGGKGNRFFLANNNRAPVTCTPGQPGQQRVLHLELKTVAHAGMVGFPNAGKSSLLRAISNARPAVASYPFTTLKPHVGIVHYEGHLQIAVADIPGIIRGAHQNRGLGSAFLRHIERCRFLLFVVDLSQPEPWTQVDDLKYELEMYEKGLSERPHAIIANKIDLPEAQANLSQLRDHLGQEVIVLSALTGENLEQLLLHLKVLYDAYTEAELGQGRQPLRW.

Residues 15–406 form a localized in the mitochondria region; the sequence is FEGVGHWALS…LGQGRQPLRW (392 aa). The interval 30–406 is not localized in the mitochondria; sequence KPSRLLPQQA…LGQGRQPLRW (377 aa). Residues 70 to 224 enclose the Obg domain; it reads RYFVDYRRVL…RVLHLELKTV (155 aa). An OBG-type G domain is found at 225 to 390; it reads AHAGMVGFPN…LLLHLKVLYD (166 aa). GTP contacts are provided by residues 231-238, 256-260, 278-281, 345-348, and 371-373; these read GFPNAGKS, FTTLK, DIPG, NKID, and SAL. Mg(2+) contacts are provided by Ser238 and Thr258.

This sequence belongs to the TRAFAC class OBG-HflX-like GTPase superfamily. OBG GTPase family. In terms of assembly, associates with the mitochondrial ribosome large subunit; the association occurs in a GTP-dependent manner. Requires Mg(2+) as cofactor.

Its subcellular location is the mitochondrion. The protein resides in the mitochondrion inner membrane. Functionally, plays a role in the regulation of the mitochondrial ribosome assembly and of translational activity. Displays GTPase activity. Involved in the ribosome maturation process. This chain is Mitochondrial ribosome-associated GTPase 2 (MTG2), found in Pongo abelii (Sumatran orangutan).